A 130-amino-acid chain; its full sequence is MCLIGVEGNLFQFARLIDAKQEAFSFFKYISYGCYCGWGGQGTPKDATDRCCFVHDCCYARVKGCNPKLVEYSYSYRTGKIVCGGDDPCLRAVCECDRVAAICFRENMNTYDKKYMLYSIFDCKEESDQC.

The signal sequence occupies residues 1-8; that stretch reads MCLIGVEG. Disulfide bonds link cysteine 34/cysteine 123, cysteine 36/cysteine 52, cysteine 51/cysteine 103, cysteine 57/cysteine 130, cysteine 58/cysteine 96, cysteine 65/cysteine 89, and cysteine 83/cysteine 94. Residues tyrosine 35, glycine 37, and glycine 39 each contribute to the Ca(2+) site. Residue histidine 55 is part of the active site. Aspartate 56 serves as a coordination point for Ca(2+). Aspartate 97 is an active-site residue.

The protein belongs to the phospholipase A2 family. Group II subfamily. D49 sub-subfamily. In terms of assembly, heterodimer of an acidic protein having phospholipase A2 activity (B chain) and an A chain which weakly inhibits the B chain enzymatic activity but potentiates its lethal potency. It depends on Ca(2+) as a cofactor. Expressed by the venom gland.

The protein resides in the secreted. The catalysed reaction is a 1,2-diacyl-sn-glycero-3-phosphocholine + H2O = a 1-acyl-sn-glycero-3-phosphocholine + a fatty acid + H(+). Monomer: Snake venom phospholipase A2 (PLA2) that shows a high PLA2 activity (2110 umol/min/mg). Its function is as follows. Heterodimer (A and B chains): snake venom phospholipase A2 that shows a moderate PLA2 activity (1377 umol/min/mg). Acts as a presynaptic neurotoxin. In vivo, induces edema and produces neurotoxic symptoms in mice. It exhibits indirect hemolysis and a strong myonecrotic activity and is cytotoxic. PLA2 catalyzes the calcium-dependent hydrolysis of the 2-acyl groups in 3-sn-phosphoglycerides. This chain is Acidic phospholipase A2 daboiatoxin B chain, found in Daboia siamensis (Eastern Russel's viper).